Reading from the N-terminus, the 94-residue chain is RNA-binding protein Hfq (94 aa).

The Sm domain occupies 9 to 68; it reads DPFLNALRRERVPVSIYLVNGIKLQGQVESFDQFVILLKNTVSQMVYKHAISTVVPARPF. The disordered stretch occupies residues 70–94; the sequence is VSAHHSSPAPTPAGGFNGQNDETSE.

The protein belongs to the Hfq family. Homohexamer.

In terms of biological role, RNA chaperone that binds small regulatory RNA (sRNAs) and mRNAs to facilitate mRNA translational regulation in response to envelope stress, environmental stress and changes in metabolite concentrations. Also binds with high specificity to tRNAs. The polypeptide is RNA-binding protein Hfq (Shewanella woodyi (strain ATCC 51908 / MS32)).